The sequence spans 1013 residues: Tolloid-like protein 1 (1013 aa).

Positions 1–30 (MGLGTLSPRMLVWLVASGIVFYGELWVCAG) are cleaved as a signal peptide. The propeptide occupies 31–147 (LDYDYTFDGN…GQNEKNRVPR (117 aa)). The 200-residue stretch at 148-347 (AATSRTERIW…AQARKLYRCP (200 aa)) folds into the Peptidase M12A domain. A glycan (N-linked (GlcNAc...) asparagine) is linked at Asn-169. 4 cysteine pairs are disulfide-bonded: Cys-190–Cys-346, Cys-210–Cys-232, Cys-212–Cys-213, and Cys-349–Cys-375. Zn(2+) is bound at residue His-240. Glu-241 is a catalytic residue. Residues His-244 and His-250 each coordinate Zn(2+). CUB domains are found at residues 349-461 (CGET…YEAI) and 462-574 (CGGE…FFKE). N-linked (GlcNAc...) asparagine glycosylation is found at Asn-359 and Asn-390. Cystine bridges form between Cys-402–Cys-424, Cys-462–Cys-488, Cys-515–Cys-537, Cys-578–Cys-590, Cys-586–Cys-599, Cys-601–Cys-614, Cys-618–Cys-644, Cys-671–Cys-693, Cys-734–Cys-745, Cys-741–Cys-754, Cys-756–Cys-769, Cys-774–Cys-800, Cys-827–Cys-849, Cys-887–Cys-917, and Cys-944–Cys-966. Positions 574–615 (EEDECAKPDRGGCEQRCLNTLGSYQCACEPGYELGPDRRSCE) constitute an EGF-like 1; calcium-binding domain. Residues 618-730 (CGGLLTKLNG…KGFKAHFFSD (113 aa)) form the CUB 3 domain. N-linked (GlcNAc...) asparagine glycosylation is present at Asn-626. Residues 730 to 770 (DKDECSKDNGGCQHECVNTMGSYMCQCRNGFVLHDNKHDCK) form the EGF-like 2; calcium-binding domain. CUB domains follow at residues 774–886 (CEQK…HSTE) and 887–1003 (CGGR…YKSI).

It depends on Zn(2+) as a cofactor.

The protein localises to the secreted. In terms of biological role, protease which processes procollagen C-propeptides, such as chordin, pro-biglycan and pro-lysyl oxidase. Required for the embryonic development. Predominant protease, which in the development, influences dorsal-ventral patterning and skeletogenesis. The sequence is that of Tolloid-like protein 1 (TLL1) from Homo sapiens (Human).